A 203-amino-acid polypeptide reads, in one-letter code: Large ribosomal subunit protein uL13 (203 aa).

Ala-2 is subject to N-acetylalanine. Citrulline is present on Arg-59. Ser-77 bears the Phosphoserine mark. The residue at position 140 (Arg-140) is a Citrulline. At Lys-191 the chain carries N6-acetyllysine.

It belongs to the universal ribosomal protein uL13 family. In terms of assembly, component of the 60S ribosome. Component of the GAIT complex. Interacts with EIF4G1. Post-translationally, phosphorylation at Ser-77 upon interferon-gamma treatment in macrophages involves a DAPK1-DAPK3 kinase cascade and is causing release from the ribosome, association with the GAIT complex and subsequent involvement in transcript-selective translation inhibition. Citrullinated by PADI4.

The protein localises to the cytoplasm. In terms of biological role, associated with ribosomes but is not required for canonical ribosome function and has extra-ribosomal functions. Component of the GAIT (gamma interferon-activated inhibitor of translation) complex which mediates interferon-gamma-induced transcript-selective translation inhibition in inflammation processes. Upon interferon-gamma activation and subsequent phosphorylation dissociates from the ribosome and assembles into the GAIT complex which binds to stem loop-containing GAIT elements in the 3'-UTR of diverse inflammatory mRNAs (such as ceruplasmin) and suppresses their translation. In the GAIT complex interacts with m7G cap-bound eIF4G at or near the eIF3-binding site and blocks the recruitment of the 43S ribosomal complex. Involved in methylation of rRNA. In Bos taurus (Bovine), this protein is Large ribosomal subunit protein uL13 (RPL13A).